The chain runs to 169 residues: Peptide deformylase (169 aa).

Residues C91 and H133 each coordinate Fe cation. E134 is a catalytic residue. H137 lines the Fe cation pocket.

This sequence belongs to the polypeptide deformylase family. The cofactor is Fe(2+).

The enzyme catalyses N-terminal N-formyl-L-methionyl-[peptide] + H2O = N-terminal L-methionyl-[peptide] + formate. Functionally, removes the formyl group from the N-terminal Met of newly synthesized proteins. Requires at least a dipeptide for an efficient rate of reaction. N-terminal L-methionine is a prerequisite for activity but the enzyme has broad specificity at other positions. This Erwinia tasmaniensis (strain DSM 17950 / CFBP 7177 / CIP 109463 / NCPPB 4357 / Et1/99) protein is Peptide deformylase.